The chain runs to 772 residues: Carnitine O-palmitoyltransferase 1, muscle isoform (772 aa).

Over 1–47 (MAEAHQAVAFQFTVTPDGVDFRLSREALRHIYLSGINSWKKRLIRIK) the chain is Cytoplasmic. A helical membrane pass occupies residues 48 to 73 (NGILRGVYPGSPTSWLVVVMATVGSN). Residues 74-102 (YCKVDISMGLVHCIQRCLPTRYGSYGTPQ) lie on the Mitochondrial intermembrane side of the membrane. The helical transmembrane segment at 103–122 (TETLLSMVIFSTGVWATGIF) threads the bilayer. The Cytoplasmic segment spans residues 123–772 (LFRQTLKLLL…DLFKISKTDS (650 aa)). Catalysis depends on H473, which acts as the Proton acceptor. 555–567 (GKGLIKKCRTSPD) provides a ligand contact to CoA. Residues Y589 and T602 each coordinate (R)-carnitine.

The protein belongs to the carnitine/choline acetyltransferase family. As to expression, high expression in heart, skeletal muscle and brown adipose tissue. Also expressed in white adipose tissue, but not in liver.

The protein localises to the mitochondrion outer membrane. The enzyme catalyses (R)-carnitine + hexadecanoyl-CoA = O-hexadecanoyl-(R)-carnitine + CoA. It participates in lipid metabolism; fatty acid beta-oxidation. Its function is as follows. Catalyzes the transfer of the acyl group of long-chain fatty acid-CoA conjugates onto carnitine, an essential step for the mitochondrial uptake of long-chain fatty acids and their subsequent beta-oxidation in the mitochondrion. This Rattus norvegicus (Rat) protein is Carnitine O-palmitoyltransferase 1, muscle isoform (Cpt1b).